A 164-amino-acid polypeptide reads, in one-letter code: Ubiquitin-conjugating enzyme E2 2 (164 aa).

One can recognise a UBC core domain in the interval 4–150 (PARRRLMRDF…VKETVEKSWE (147 aa)). Catalysis depends on cysteine 88, which acts as the Glycyl thioester intermediate.

It belongs to the ubiquitin-conjugating enzyme family.

The protein localises to the cytoplasm. The protein resides in the nucleus. The catalysed reaction is S-ubiquitinyl-[E1 ubiquitin-activating enzyme]-L-cysteine + [E2 ubiquitin-conjugating enzyme]-L-cysteine = [E1 ubiquitin-activating enzyme]-L-cysteine + S-ubiquitinyl-[E2 ubiquitin-conjugating enzyme]-L-cysteine.. Its pathway is protein modification; protein ubiquitination. In terms of biological role, catalyzes the covalent attachment of ubiquitin to other proteins. Plays a role in transcription regulation by catalyzing the monoubiquitination of histone H2B to form H2BK123ub1. H2BK123ub1 gives a specific tag for epigenetic transcriptional activation and is also a prerequisite for H3K4me and H3K79me formation. Also involved in postreplication repair of UV-damaged DNA, in N-end rule-dependent protein degradation and in sporulation. In Kluyveromyces lactis (strain ATCC 8585 / CBS 2359 / DSM 70799 / NBRC 1267 / NRRL Y-1140 / WM37) (Yeast), this protein is Ubiquitin-conjugating enzyme E2 2 (UBC2).